Reading from the N-terminus, the 142-residue chain is Large-conductance mechanosensitive channel (142 aa).

Transmembrane regions (helical) follow at residues 14 to 34 (VMDL…VTSV), 38 to 58 (LVMP…NYFL), and 82 to 102 (GSFI…FLLV).

Belongs to the MscL family. In terms of assembly, homopentamer.

Its subcellular location is the cell inner membrane. Its function is as follows. Channel that opens in response to stretch forces in the membrane lipid bilayer. May participate in the regulation of osmotic pressure changes within the cell. This Sinorhizobium fredii (strain NBRC 101917 / NGR234) protein is Large-conductance mechanosensitive channel.